The sequence spans 369 residues: Flagellar P-ring protein (369 aa).

Residues 1 to 22 (MIKLKQLIAATLLLSTAFGVHA) form the signal peptide.

This sequence belongs to the FlgI family. In terms of assembly, the basal body constitutes a major portion of the flagellar organelle and consists of four rings (L,P,S, and M) mounted on a central rod.

It localises to the periplasm. The protein resides in the bacterial flagellum basal body. In terms of biological role, assembles around the rod to form the L-ring and probably protects the motor/basal body from shearing forces during rotation. This is Flagellar P-ring protein from Pseudomonas syringae pv. syringae (strain B728a).